A 144-amino-acid polypeptide reads, in one-letter code: Urease accessory protein UreE (144 aa).

Belongs to the UreE family.

It is found in the cytoplasm. Functionally, involved in urease metallocenter assembly. Binds nickel. Probably functions as a nickel donor during metallocenter assembly. The protein is Urease accessory protein UreE of Thermosynechococcus vestitus (strain NIES-2133 / IAM M-273 / BP-1).